A 170-amino-acid polypeptide reads, in one-letter code: 2S seed storage protein 2 (170 aa).

A signal peptide spans 1-21 (MANKLFLVCATFALCFLLTNA). 2 propeptides span residues 22 to 37 (SIYR…DASN) and 73 to 88 (GPSL…DIEN).

Belongs to the 2S seed storage albumins family. As to quaternary structure, the mature protein consists of a small and a large chain linked by disulfide bonds.

Functionally, this is a 2S seed storage protein. The polypeptide is 2S seed storage protein 2 (AT2S2) (Arabidopsis thaliana (Mouse-ear cress)).